The chain runs to 355 residues: Methylthioribose-1-phosphate isomerase (355 aa).

Residues Arg47–Ala49, Arg90, and Gln197 each bind substrate. Catalysis depends on Asp238, which acts as the Proton donor. Residue Asn248–Lys249 participates in substrate binding.

It belongs to the eIF-2B alpha/beta/delta subunits family. MtnA subfamily.

It carries out the reaction 5-(methylsulfanyl)-alpha-D-ribose 1-phosphate = 5-(methylsulfanyl)-D-ribulose 1-phosphate. The protein operates within amino-acid biosynthesis; L-methionine biosynthesis via salvage pathway; L-methionine from S-methyl-5-thio-alpha-D-ribose 1-phosphate: step 1/6. Catalyzes the interconversion of methylthioribose-1-phosphate (MTR-1-P) into methylthioribulose-1-phosphate (MTRu-1-P). The sequence is that of Methylthioribose-1-phosphate isomerase from Herpetosiphon aurantiacus (strain ATCC 23779 / DSM 785 / 114-95).